A 144-amino-acid polypeptide reads, in one-letter code: UPF0102 protein Veis_0630 (144 aa).

Residues 11–31 form a disordered region; it reads PPAAAPGPAPAPASAATASER.

The protein belongs to the UPF0102 family.

The sequence is that of UPF0102 protein Veis_0630 from Verminephrobacter eiseniae (strain EF01-2).